Reading from the N-terminus, the 210-residue chain is Proteasome subunit beta 2 (210 aa).

Residues 1-12 (MSNNVEEKILHG) constitute a propeptide, removed in mature form; by autocatalysis. The active-site Nucleophile is the T13.

The protein belongs to the peptidase T1B family. The 20S proteasome core is composed of 14 alpha and 14 beta subunits that assemble into four stacked heptameric rings, resulting in a barrel-shaped structure. The two inner rings, each composed of seven catalytic beta subunits, are sandwiched by two outer rings, each composed of seven alpha subunits. The catalytic chamber with the active sites is on the inside of the barrel. Has a gated structure, the ends of the cylinder being occluded by the N-termini of the alpha-subunits. Is capped at one or both ends by the proteasome regulatory ATPase, PAN.

The protein resides in the cytoplasm. The enzyme catalyses Cleavage of peptide bonds with very broad specificity.. The formation of the proteasomal ATPase PAN-20S proteasome complex, via the docking of the C-termini of PAN into the intersubunit pockets in the alpha-rings, triggers opening of the gate for substrate entry. Interconversion between the open-gate and close-gate conformations leads to a dynamic regulation of the 20S proteasome proteolysis activity. In terms of biological role, component of the proteasome core, a large protease complex with broad specificity involved in protein degradation. The protein is Proteasome subunit beta 2 of Nitrosopumilus maritimus (strain SCM1).